Reading from the N-terminus, the 1203-residue chain is DNA-directed RNA polymerase subunit beta (1203 aa).

The segment covering 1174–1195 (AAQEAKAAFEAEEAEKATKAEA) has biased composition (basic and acidic residues). Residues 1174–1203 (AAQEAKAAFEAEEAEKATKAEATEEAAEQE) form a disordered region.

It belongs to the RNA polymerase beta chain family. The RNAP catalytic core consists of 2 alpha, 1 beta, 1 beta' and 1 omega subunit. When a sigma factor is associated with the core the holoenzyme is formed, which can initiate transcription.

It carries out the reaction RNA(n) + a ribonucleoside 5'-triphosphate = RNA(n+1) + diphosphate. DNA-dependent RNA polymerase catalyzes the transcription of DNA into RNA using the four ribonucleoside triphosphates as substrates. The sequence is that of DNA-directed RNA polymerase subunit beta from Streptococcus pneumoniae (strain JJA).